The following is a 131-amino-acid chain: Profilin (131 aa).

This sequence belongs to the profilin family. In terms of assembly, occurs in many kinds of cells as a complex with monomeric actin in a 1:1 ratio.

The protein localises to the cytoplasm. The protein resides in the cytoskeleton. Binds to actin and affects the structure of the cytoskeleton. At high concentrations, profilin prevents the polymerization of actin, whereas it enhances it at low concentrations. By binding to PIP2, it inhibits the formation of IP3 and DG. The polypeptide is Profilin (Fragaria ananassa (Strawberry)).